The following is a 466-amino-acid chain: Soluble pyridine nucleotide transhydrogenase (466 aa).

An FAD-binding site is contributed by 36 to 45 (ERYHNVGGGC).

This sequence belongs to the class-I pyridine nucleotide-disulfide oxidoreductase family. FAD serves as cofactor.

The protein localises to the cytoplasm. The enzyme catalyses NAD(+) + NADPH = NADH + NADP(+). In terms of biological role, conversion of NADPH, generated by peripheral catabolic pathways, to NADH, which can enter the respiratory chain for energy generation. This chain is Soluble pyridine nucleotide transhydrogenase, found in Salmonella paratyphi A (strain ATCC 9150 / SARB42).